The primary structure comprises 457 residues: Multidrug resistance protein MdtK (457 aa).

12 consecutive transmembrane segments (helical) span residues 11–31, 53–73, 93–113, 127–147, 160–180, 189–209, 243–263, 276–296, 314–334, 350–370, 387–407, and 418–438; these read LLAL…MGFV, IWLP…PVIA, WLAG…GYII, AVGY…FQVA, GMVM…IFIY, GGVG…LAMV, LPIA…ALLV, IALN…AAVT, AART…IFTV, VVTL…SDSI, IFYI…YILA, and PAGF…MMML.

Belongs to the multi antimicrobial extrusion (MATE) (TC 2.A.66.1) family. MdtK subfamily.

The protein localises to the cell inner membrane. Multidrug efflux pump that functions probably as a Na(+)/drug antiporter. In Escherichia coli O45:K1 (strain S88 / ExPEC), this protein is Multidrug resistance protein MdtK.